The sequence spans 235 residues: Glycerol-3-phosphate acyltransferase (235 aa).

The next 6 helical transmembrane spans lie at 2–22 (FTLI…TSII), 56–76 (TVTI…VVFF), 94–114 (LIAG…GFKG), 126–146 (FGIA…VVFL), 152–172 (VASI…KYLF), and 190–210 (FIHD…AAAI).

This sequence belongs to the PlsY family. In terms of assembly, probably interacts with PlsX.

It is found in the cell inner membrane. The enzyme catalyses an acyl phosphate + sn-glycerol 3-phosphate = a 1-acyl-sn-glycero-3-phosphate + phosphate. Its pathway is lipid metabolism; phospholipid metabolism. In terms of biological role, catalyzes the transfer of an acyl group from acyl-phosphate (acyl-PO(4)) to glycerol-3-phosphate (G3P) to form lysophosphatidic acid (LPA). This enzyme utilizes acyl-phosphate as fatty acyl donor, but not acyl-CoA or acyl-ACP. The sequence is that of Glycerol-3-phosphate acyltransferase from Chlorobium phaeobacteroides (strain BS1).